Reading from the N-terminus, the 469-residue chain is UDP-N-acetylmuramoylalanine--D-glutamate ligase (469 aa).

Gly110–Thr116 is a binding site for ATP.

It belongs to the MurCDEF family.

The protein resides in the cytoplasm. It catalyses the reaction UDP-N-acetyl-alpha-D-muramoyl-L-alanine + D-glutamate + ATP = UDP-N-acetyl-alpha-D-muramoyl-L-alanyl-D-glutamate + ADP + phosphate + H(+). The protein operates within cell wall biogenesis; peptidoglycan biosynthesis. Cell wall formation. Catalyzes the addition of glutamate to the nucleotide precursor UDP-N-acetylmuramoyl-L-alanine (UMA). The chain is UDP-N-acetylmuramoylalanine--D-glutamate ligase from Synechococcus sp. (strain JA-3-3Ab) (Cyanobacteria bacterium Yellowstone A-Prime).